A 60-amino-acid chain; its full sequence is Metallothionein A (60 aa).

Positions Met-1–Cys-28 are beta. 20 residues coordinate a divalent metal cation: Cys-4, Cys-6, Cys-12, Cys-14, Cys-18, Cys-20, Cys-23, Cys-25, Cys-28, Cys-32, Cys-33, Cys-35, Cys-36, Cys-40, Cys-43, Cys-47, Cys-49, Cys-54, Cys-58, and Cys-59. The interval Lys-29–Gln-60 is alpha.

It belongs to the metallothionein superfamily. Type 1 family.

In terms of biological role, metallothioneins have a high content of cysteine residues that bind various heavy metals. The polypeptide is Metallothionein A (mta) (Parachaenichthys charcoti (Charcot's dragonfish)).